The following is a 354-amino-acid chain: Isopentenyl-diphosphate delta-isomerase (354 aa).

11–12 (KK) serves as a coordination point for substrate. Residues serine 67, 68–70 (SMT), serine 98, and asparagine 126 contribute to the FMN site. 98–100 (SFK) lines the substrate pocket. Glutamine 160 provides a ligand contact to substrate. Mg(2+) is bound at residue glutamate 161. Residues lysine 192, threonine 222, and 289–290 (AA) each bind FMN.

Belongs to the IPP isomerase type 2 family. In terms of assembly, homooctamer. Dimer of tetramers. Requires FMN as cofactor. It depends on NADPH as a cofactor. Mg(2+) is required as a cofactor.

The protein localises to the cytoplasm. It catalyses the reaction isopentenyl diphosphate = dimethylallyl diphosphate. Involved in the biosynthesis of isoprenoids. Catalyzes the 1,3-allylic rearrangement of the homoallylic substrate isopentenyl (IPP) to its allylic isomer, dimethylallyl diphosphate (DMAPP). This is Isopentenyl-diphosphate delta-isomerase from Borrelia garinii subsp. bavariensis (strain ATCC BAA-2496 / DSM 23469 / PBi) (Borreliella bavariensis).